We begin with the raw amino-acid sequence, 318 residues long: L-malyl-CoA/beta-methylmalyl-CoA lyase (318 aa).

Substrate contacts are provided by phenylalanine 19, arginine 24, lysine 30, and arginine 76. Residues glutamate 141 and aspartate 168 each contribute to the Mg(2+) site. Substrate is bound by residues 167–168 and 251–252; these read AD and IH.

It belongs to the HpcH/HpaI aldolase family. Homohexamer. Dimer of trimers. Mg(2+) is required as a cofactor. The cofactor is Mn(2+).

It catalyses the reaction (S)-malyl-CoA = glyoxylate + acetyl-CoA. The catalysed reaction is (2R,3S)-beta-methylmalyl-CoA = propanoyl-CoA + glyoxylate. Its activity is regulated as follows. In vitro inhibited by EDTA. Involved in the ethylmalonyl-CoA pathway for acetate assimilation. Catalyzes the reversible condensation of glyoxylate and acetyl-CoA to L-malyl-CoA and the reversible condensation of glyoxylate and propionyl-CoA to beta-methylmalyl-CoA. The protein is L-malyl-CoA/beta-methylmalyl-CoA lyase of Rhodobacter capsulatus (Rhodopseudomonas capsulata).